A 148-amino-acid polypeptide reads, in one-letter code: uncharacterized protein (148 aa).

This is an uncharacterized protein from Bacillus subtilis (Bacteriophage SP01).